The chain runs to 266 residues: Protein STAY-GREEN homolog, chloroplastic (266 aa).

The N-terminal 50 residues, 1 to 50, are a transit peptide targeting the chloroplast; that stretch reads MGTLTASLVAPSKLNPEKHSSLFVYKTRRKSHKNQSIVPVARLFGPAIFE.

The protein belongs to the staygreen family.

It is found in the plastid. Its subcellular location is the chloroplast. In terms of biological role, required to trigger chlorophyll degradation during leaf senescence and fruit ripening. The sequence is that of Protein STAY-GREEN homolog, chloroplastic from Capsicum annuum (Capsicum pepper).